Consider the following 270-residue polypeptide: Ethanolamine ammonia-lyase small subunit (270 aa).

Adenosylcob(III)alamin-binding residues include Val161, Glu182, and Cys211.

Belongs to the EutC family. In terms of assembly, the basic unit is a heterodimer which dimerizes to form tetramers. The heterotetramers trimerize; 6 large subunits form a core ring with 6 small subunits projecting outwards. Adenosylcob(III)alamin is required as a cofactor.

It is found in the bacterial microcompartment. The catalysed reaction is ethanolamine = acetaldehyde + NH4(+). It functions in the pathway amine and polyamine degradation; ethanolamine degradation. In terms of biological role, catalyzes the deamination of various vicinal amino-alcohols to oxo compounds. Allows this organism to utilize ethanolamine as the sole source of nitrogen and carbon in the presence of external vitamin B12. The sequence is that of Ethanolamine ammonia-lyase small subunit from Azotobacter vinelandii (strain DJ / ATCC BAA-1303).